Here is a 478-residue protein sequence, read N- to C-terminus: Lysosome membrane protein 2 (478 aa).

The Cytoplasmic segment spans residues 2–4 (ARC). A helical transmembrane segment spans residues 5 to 27 (CFYTAGTLSLLLLVTSVTLLVAR). Over 28–433 (VFQKAVDQTI…QLKSVINTTL (406 aa)) the chain is Lumenal. Residues N45, N68, N105, and N122 are each glycosylated (N-linked (GlcNAc...) asparagine). Positions 155 to 191 (IIEAMLKAYQQTLFVTHTVHELLWGYKDEVLSLVHIF) are important for interaction with GBA1. N-linked (GlcNAc...) asparagine glycosylation is found at N206, N224, N249, and N304. 2 cysteine pairs are disulfide-bonded: C274–C329 and C312–C318. N325, N412, and N430 each carry an N-linked (GlcNAc...) asparagine glycan. A helical membrane pass occupies residues 434-459 (IVTNIPYIIMALGVFFGLIFTWLACR). Residues 460-478 (GQGSTDEGTADERAPLIRT) lie on the Cytoplasmic side of the membrane.

The protein belongs to the CD36 family. Interacts with GBA1. In terms of processing, acylated by palmitic acid group(s).

It is found in the lysosome membrane. Functionally, acts as a lysosomal receptor for glucosylceramidase (GBA1) targeting. This is Lysosome membrane protein 2 (Scarb2) from Rattus norvegicus (Rat).